We begin with the raw amino-acid sequence, 92 residues long: Dynein light chain 1, cytoplasmic (92 aa).

Belongs to the dynein light chain family. As to quaternary structure, homodimer. Cytoplasmic dynein consists of two catalytic heavy chains (HCs) and a number of non-catalytic subunits which present intermediate chains (ICs), light intermediate chains (LICs) and light chains (LCs). Component of the nuclear pore complex (NPC). NPC constitutes the exclusive means of nucleocytoplasmic transport. NPCs allow the passive diffusion of ions and small molecules and the active, nuclear transport receptor-mediated bidirectional transport of macromolecules such as proteins, RNAs, ribonucleoparticles (RNPs), and ribosomal subunits across the nuclear envelope. Due to its 8-fold rotational symmetry, all subunits are present with 8 copies or multiples thereof. Part of the NUP82 subcomplex. In the complex, interacts directly with Nup159.

The protein resides in the cytoplasm. It localises to the cytoskeleton. It is found in the nucleus. Its subcellular location is the nuclear pore complex. Its function is as follows. Acts as one of several non-catalytic accessory components of the cytoplasmic dynein complex that are thought to be involved in linking dynein to cargos and to adapter proteins that regulate dynein function. Cytoplasmic dynein 1 acts as a motor for the intracellular retrograde motility of vesicles and organelles along microtubules. May play a role in changing or maintaining the spatial distribution of cytoskeletal structures. Also a component of the nuclear pore complex where it may contribute to the stable association of the Nup82 subcomplex with the NPC. This Saccharomyces cerevisiae (strain ATCC 204508 / S288c) (Baker's yeast) protein is Dynein light chain 1, cytoplasmic (DYN2).